Consider the following 137-residue polypeptide: Translation initiation factor 2 subunit beta (137 aa).

This sequence belongs to the eIF-2-beta/eIF-5 family. As to quaternary structure, heterotrimer composed of an alpha, a beta and a gamma chain.

Its function is as follows. eIF-2 functions in the early steps of protein synthesis by forming a ternary complex with GTP and initiator tRNA. The protein is Translation initiation factor 2 subunit beta (eif2b) of Archaeoglobus fulgidus (strain ATCC 49558 / DSM 4304 / JCM 9628 / NBRC 100126 / VC-16).